Reading from the N-terminus, the 156-residue chain is Calglandulin (156 aa).

EF-hand domains are found at residues 8–43 (EQIT…VGIN), 44–79 (PTKR…YHEK), 82–117 (NQDE…AGEP), and 118–153 (LNEQ…ESFK). Ca(2+) is bound by residues Asp131, Asp133, Asp135, Thr137, and Glu142.

This sequence belongs to the calmodulin family. Calglandulin subfamily. In terms of tissue distribution, expressed by the venom gland.

It is found in the cytoplasm. In terms of biological role, may be involved in the cellular control mechanism of the secretion of toxins from the gland into the venom. The sequence is that of Calglandulin from Bothrops insularis (Golden lancehead).